A 253-amino-acid chain; its full sequence is RAD51-associated protein 1 (253 aa).

The interaction with DNA stretch occupies residues 32–51 (APLTKKSRTQPKEPKKENKK). Disordered stretches follow at residues 33 to 74 (PLTK…TSLD), 141 to 169 (DREH…EGND), and 184 to 244 (KKIK…WVPP). A compositionally biased stretch (acidic residues) spans 154–169 (PDEESEEDSDYREGND). Residues 184–195 (KKIKRQTRKEKK) are compositionally biased toward basic residues. The interaction with DNA stretch occupies residues 190 to 241 (TRKEKKTPKSENNTTVMELKSEQTQKMMSTSSEPVGRPLYTSSPVTNKKPKW). The span at 199-222 (SENNTTVMELKSEQTQKMMSTSSE) shows a compositional bias: polar residues.

Monomer.

The protein localises to the chromosome. It localises to the nucleus. In terms of biological role, structure-specific DNA-binding protein involved in DNA repair by promoting RAD51-mediated homologous recombination. Acts by stimulating D-Loop formation by RAD51: specifically enhances joint molecule formation through its structure-specific DNA interaction and its interaction with RAD51. Binds single-stranded DNA (ssDNA), double-stranded DNA (dsDNA) and secondary DNA structures, such as D-loop structures: has a strong preference for branched-DNA structures that are obligatory intermediates during joint molecule formation. Involved in mitotic recombination-dependent replication fork processing. Also involved in meiosis by promoting DMC1-mediated homologous meiotic recombination. This is RAD51-associated protein 1 from Gallus gallus (Chicken).